The sequence spans 258 residues: Spindlin-2A (258 aa).

Low complexity predominate over residues 1-23 (MKTPNAQEAEGQQTRAAAGRATG). The interval 1–49 (MKTPNAQEAEGQQTRAAAGRATGSANMTKKKVSQKKQRGRPSSQPRRNI) is disordered. Residues 28-39 (TKKKVSQKKQRG) are compositionally biased toward basic residues. Tudor-like domain stretches follow at residues 50 to 99 (VGCR…LELH), 129 to 178 (IGKA…YQLL), and 210 to 255 (IGKH…YDLV). 2 histone H3K4me3 and H3R8me2a binding regions span residues E138 and 246–248 (DFH).

Belongs to the SPIN/STSY family. In terms of assembly, interacts with C11orf84/SPINDOC.

Its subcellular location is the nucleus. May be involved in the regulation of cell cycle progression. Exhibits H3K4me3-binding activity. This Homo sapiens (Human) protein is Spindlin-2A (SPIN2A).